Reading from the N-terminus, the 361-residue chain is MSKRAFNFCAGPAALPDAVLQRAQAEMLDWRGKGLSVMEMSHRSDDYVAIAEKAEQDLRDLLSVPSNYKVLFLQGGASQQFAEIPLNLLPENGVADYVETGIWSKKAIEEARRFGSVNVAASAKAYDYLAIPGQNEWKLSKNAAYLHYASNETIGGLQFDWVPEAGDVPLVVDMSSDILSRPIDVSQYGLIYAGAQKNIGPSGLVVVIVREDLLGRARSSCPTMLDYKVSADNGSMYNTPATYSWYLSGLVFEWLKEQGGVEAMEQRNRAKKDRLYGFIDSSEFYTNPISHNARSWMNVPFRLADERLDKAFLAGADARGLLNLKGHRSVGGMRASIYNALGLEAVEALVGYMAEFEKEHA.

Residue Arg-43 coordinates L-glutamate. Pyridoxal 5'-phosphate-binding positions include 77–78 (AS), Trp-103, Thr-153, Asp-173, and Gln-196. At Lys-197 the chain carries N6-(pyridoxal phosphate)lysine. 238 to 239 (NT) is a pyridoxal 5'-phosphate binding site.

The protein belongs to the class-V pyridoxal-phosphate-dependent aminotransferase family. SerC subfamily. In terms of assembly, homodimer. Requires pyridoxal 5'-phosphate as cofactor.

Its subcellular location is the cytoplasm. It carries out the reaction O-phospho-L-serine + 2-oxoglutarate = 3-phosphooxypyruvate + L-glutamate. The enzyme catalyses 4-(phosphooxy)-L-threonine + 2-oxoglutarate = (R)-3-hydroxy-2-oxo-4-phosphooxybutanoate + L-glutamate. The protein operates within amino-acid biosynthesis; L-serine biosynthesis; L-serine from 3-phospho-D-glycerate: step 2/3. Its pathway is cofactor biosynthesis; pyridoxine 5'-phosphate biosynthesis; pyridoxine 5'-phosphate from D-erythrose 4-phosphate: step 3/5. Its function is as follows. Catalyzes the reversible conversion of 3-phosphohydroxypyruvate to phosphoserine and of 3-hydroxy-2-oxo-4-phosphonooxybutanoate to phosphohydroxythreonine. The sequence is that of Phosphoserine aminotransferase from Pseudomonas entomophila (strain L48).